Reading from the N-terminus, the 420-residue chain is Putative T-box protein 33 (420 aa).

A DNA-binding region (T-box) is located at residues 93–291 (LWKELHYLSN…ANPTSRGDAK (199 aa)). Over residues 395–412 (SPPLQPTATSPEASQNQI) the composition is skewed to polar residues. Residues 395–420 (SPPLQPTATSPEASQNQIKLEMNQYM) are disordered.

Its subcellular location is the nucleus. This is Putative T-box protein 33 (tbx-33) from Caenorhabditis elegans.